A 477-amino-acid polypeptide reads, in one-letter code: Glycogen synthase (477 aa).

K15 contributes to the ADP-alpha-D-glucose binding site.

It belongs to the glycosyltransferase 1 family. Bacterial/plant glycogen synthase subfamily.

It carries out the reaction [(1-&gt;4)-alpha-D-glucosyl](n) + ADP-alpha-D-glucose = [(1-&gt;4)-alpha-D-glucosyl](n+1) + ADP + H(+). It functions in the pathway glycan biosynthesis; glycogen biosynthesis. Synthesizes alpha-1,4-glucan chains using ADP-glucose. The polypeptide is Glycogen synthase (Streptococcus pneumoniae (strain Hungary19A-6)).